A 264-amino-acid polypeptide reads, in one-letter code: 3-methyl-2-oxobutanoate hydroxymethyltransferase (264 aa).

The Mg(2+) site is built by aspartate 45 and aspartate 84. 3-methyl-2-oxobutanoate is bound by residues 45–46 (DS), aspartate 84, and lysine 112. Residue glutamate 114 coordinates Mg(2+). Glutamate 181 (proton acceptor) is an active-site residue.

It belongs to the PanB family. Homodecamer; pentamer of dimers. Requires Mg(2+) as cofactor.

It is found in the cytoplasm. It carries out the reaction 3-methyl-2-oxobutanoate + (6R)-5,10-methylene-5,6,7,8-tetrahydrofolate + H2O = 2-dehydropantoate + (6S)-5,6,7,8-tetrahydrofolate. The protein operates within cofactor biosynthesis; (R)-pantothenate biosynthesis; (R)-pantoate from 3-methyl-2-oxobutanoate: step 1/2. In terms of biological role, catalyzes the reversible reaction in which hydroxymethyl group from 5,10-methylenetetrahydrofolate is transferred onto alpha-ketoisovalerate to form ketopantoate. This is 3-methyl-2-oxobutanoate hydroxymethyltransferase from Shewanella amazonensis (strain ATCC BAA-1098 / SB2B).